The sequence spans 735 residues: Post-transcriptional regulator MKT1 (735 aa).

The segment at 475–722 (QVIYNTMEET…ANERMKRAQK (248 aa)) is interaction with PBP1.

The protein belongs to the XPG/RAD2 endonuclease family. In terms of assembly, forms a complex composed of at least MKT1, PBP1, XAC1 and LSM12. Within the complex, interacts (via C-terminus) with PBP1; the interaction is direct. Interacts with RNA-binding protein ZC3H11 (via MKT1-binding motif); the interaction is direct. May interact with RNA-binding proteins CFB1 and CFB2. Interacts with the EIF4E6-EIF4G5 translation initiation complex via EIF4G5; the interaction with EIF4G5 is direct.

It is found in the cytoplasm. Its subcellular location is the cytosol. It localises to the stress granule. Its function is as follows. Involved in post-transcriptional regulation of gene expression. Promotes mRNA stabilization by recruiting a complex containing PBP1, LSM12 and XAC1 to mRNAs. Recruited to mRNAs by sequence-specific RNA binding proteins. May regulate translation through interactions with the EIF4E6-EIF4G5 translation initiation complex. This is Post-transcriptional regulator MKT1 from Trypanosoma brucei brucei (strain 927/4 GUTat10.1).